Reading from the N-terminus, the 79-residue chain is Acyl carrier protein (79 aa).

One can recognise a Carrier domain in the interval 2–77 (STIEERVKKI…QAIDYVKAHV (76 aa)). Serine 37 bears the O-(pantetheine 4'-phosphoryl)serine mark.

Belongs to the acyl carrier protein (ACP) family. 4'-phosphopantetheine is transferred from CoA to a specific serine of apo-ACP by AcpS. This modification is essential for activity because fatty acids are bound in thioester linkage to the sulfhydryl of the prosthetic group.

It is found in the cytoplasm. It participates in lipid metabolism; fatty acid biosynthesis. In terms of biological role, carrier of the growing fatty acid chain in fatty acid biosynthesis. This is Acyl carrier protein from Xanthomonas axonopodis pv. citri (strain 306).